A 298-amino-acid chain; its full sequence is Acetylglutamate kinase (298 aa).

Substrate is bound by residues glycine 69–glycine 70, arginine 91, and asparagine 191.

Belongs to the acetylglutamate kinase family. ArgB subfamily.

Its subcellular location is the cytoplasm. It carries out the reaction N-acetyl-L-glutamate + ATP = N-acetyl-L-glutamyl 5-phosphate + ADP. The protein operates within amino-acid biosynthesis; L-arginine biosynthesis; N(2)-acetyl-L-ornithine from L-glutamate: step 2/4. In terms of biological role, catalyzes the ATP-dependent phosphorylation of N-acetyl-L-glutamate. The chain is Acetylglutamate kinase from Neisseria meningitidis serogroup A / serotype 4A (strain DSM 15465 / Z2491).